A 156-amino-acid chain; its full sequence is 6,7-dimethyl-8-ribityllumazine synthase (156 aa).

5-amino-6-(D-ribitylamino)uracil-binding positions include Phe-23, 57–59, and 81–83; these read AYE and AII. 86–87 serves as a coordination point for (2S)-2-hydroxy-3-oxobutyl phosphate; it reads GT. The Proton donor role is filled by His-89. Phe-114 contacts 5-amino-6-(D-ribitylamino)uracil. Residue Arg-128 participates in (2S)-2-hydroxy-3-oxobutyl phosphate binding.

Belongs to the DMRL synthase family.

The catalysed reaction is (2S)-2-hydroxy-3-oxobutyl phosphate + 5-amino-6-(D-ribitylamino)uracil = 6,7-dimethyl-8-(1-D-ribityl)lumazine + phosphate + 2 H2O + H(+). It functions in the pathway cofactor biosynthesis; riboflavin biosynthesis; riboflavin from 2-hydroxy-3-oxobutyl phosphate and 5-amino-6-(D-ribitylamino)uracil: step 1/2. Its function is as follows. Catalyzes the formation of 6,7-dimethyl-8-ribityllumazine by condensation of 5-amino-6-(D-ribitylamino)uracil with 3,4-dihydroxy-2-butanone 4-phosphate. This is the penultimate step in the biosynthesis of riboflavin. The protein is 6,7-dimethyl-8-ribityllumazine synthase of Helicobacter pylori (strain P12).